Here is a 144-residue protein sequence, read N- to C-terminus: Large ribosomal subunit protein uL16 (144 aa).

The segment covering 1–19 (MLLPKRVKYRRQHRPKTTG) has biased composition (basic residues). A disordered region spans residues 1-23 (MLLPKRVKYRRQHRPKTTGRSKG).

Belongs to the universal ribosomal protein uL16 family. As to quaternary structure, part of the 50S ribosomal subunit.

Its function is as follows. Binds 23S rRNA and is also seen to make contacts with the A and possibly P site tRNAs. In Staphylococcus epidermidis (strain ATCC 35984 / DSM 28319 / BCRC 17069 / CCUG 31568 / BM 3577 / RP62A), this protein is Large ribosomal subunit protein uL16.